Here is a 103-residue protein sequence, read N- to C-terminus: Small ribosomal subunit protein cS23 (103 aa).

Belongs to the chloroplast-specific ribosomal protein cS23 family. In terms of assembly, part of the 30S ribosomal subunit.

Its subcellular location is the plastid. The protein resides in the chloroplast. Functionally, probably a ribosomal protein or a ribosome-associated protein. This chain is Small ribosomal subunit protein cS23 (ycf65), found in Euglena granulata.